Here is a 330-residue protein sequence, read N- to C-terminus: Inactive serine protease 45 (330 aa).

An N-terminal signal peptide occupies residues 1–35 (MATSLRLLDAGPGSLRRWIPTCFAALLLLPPRPNL). The Peptidase S1 domain occupies 45-291 (VCGAPWWSDS…YTGWIKEQVS (247 aa)). 4 disulfides stabilise this stretch: Cys75–Cys91, Cys172–Cys249, Cys207–Cys230, and Cys239–Cys267. N-linked (GlcNAc...) asparagine glycosylation occurs at Asn272.

Belongs to the peptidase S1 family.

Its subcellular location is the secreted. The chain is Inactive serine protease 45 (Prss45) from Rattus norvegicus (Rat).